The primary structure comprises 443 residues: Ribosomal protein uS12 methylthiotransferase RimO (443 aa).

The MTTase N-terminal domain maps to 5 to 115 (PNIGFISLGC…VMKHVHKYVP (111 aa)). [4Fe-4S] cluster contacts are provided by C14, C50, C79, C147, C151, and C154. Residues 133–374 (LTPKHYAYLK…MQVQQRISAA (242 aa)) form the Radical SAM core domain. Residues 377–443 (QQKVGKTLAV…ADEYDLWGTC (67 aa)) form the TRAM domain.

This sequence belongs to the methylthiotransferase family. RimO subfamily. It depends on [4Fe-4S] cluster as a cofactor.

Its subcellular location is the cytoplasm. It carries out the reaction L-aspartate(89)-[ribosomal protein uS12]-hydrogen + (sulfur carrier)-SH + AH2 + 2 S-adenosyl-L-methionine = 3-methylsulfanyl-L-aspartate(89)-[ribosomal protein uS12]-hydrogen + (sulfur carrier)-H + 5'-deoxyadenosine + L-methionine + A + S-adenosyl-L-homocysteine + 2 H(+). Its function is as follows. Catalyzes the methylthiolation of an aspartic acid residue of ribosomal protein uS12. This chain is Ribosomal protein uS12 methylthiotransferase RimO, found in Actinobacillus pleuropneumoniae serotype 5b (strain L20).